Reading from the N-terminus, the 464-residue chain is UNC93-like protein 3 (464 aa).

11 helical membrane passes run 31-51, 62-82, 84-104, 110-130, 160-180, 192-212, 251-271, 275-295, 313-333, 341-361, and 392-412; these read VHIL…AQNL, ISLG…SLVV, LMGS…FVAA, WFTM…IWVG, EFWA…LALL, TLLM…MFFI, LLIV…WAEF, IVTP…YGAL, ITFI…WLLL, VLGT…DGIL, and IAIV…IVML.

It belongs to the unc-93 family.

Its subcellular location is the membrane. The chain is UNC93-like protein 3 from Arabidopsis thaliana (Mouse-ear cress).